The primary structure comprises 149 residues: Large ribosomal subunit protein bL20m (149 aa).

The transit peptide at methionine 1–tryptophan 9 directs the protein to the mitochondrion.

This sequence belongs to the bacterial ribosomal protein bL20 family. Component of the mitochondrial ribosome large subunit (39S) which comprises a 16S rRNA and about 50 distinct proteins. Interacts with OXA1L.

The protein resides in the mitochondrion. The chain is Large ribosomal subunit protein bL20m (MRPL20) from Bos taurus (Bovine).